The chain runs to 192 residues: Nucleoside triphosphate pyrophosphatase (192 aa).

Asp-73 (proton acceptor) is an active-site residue.

Belongs to the Maf family. A divalent metal cation is required as a cofactor.

Its subcellular location is the cytoplasm. The enzyme catalyses a ribonucleoside 5'-triphosphate + H2O = a ribonucleoside 5'-phosphate + diphosphate + H(+). It carries out the reaction a 2'-deoxyribonucleoside 5'-triphosphate + H2O = a 2'-deoxyribonucleoside 5'-phosphate + diphosphate + H(+). Nucleoside triphosphate pyrophosphatase. May have a dual role in cell division arrest and in preventing the incorporation of modified nucleotides into cellular nucleic acids. The chain is Nucleoside triphosphate pyrophosphatase from Ehrlichia chaffeensis (strain ATCC CRL-10679 / Arkansas).